Reading from the N-terminus, the 512-residue chain is D-alanine--D-alanyl carrier protein ligase (512 aa).

152 to 153 provides a ligand contact to ATP; that stretch reads TS. Residue aspartate 199 coordinates D-alanine. 294–299 contributes to the ATP binding site; the sequence is NAYGPT. Position 303 (valine 303) interacts with D-alanine. Residues aspartate 385, 397–400, and lysine 499 each bind ATP; that span reads YGGR. Lysine 499 lines the D-alanine pocket.

The protein belongs to the ATP-dependent AMP-binding enzyme family. DltA subfamily.

It localises to the cytoplasm. It catalyses the reaction holo-[D-alanyl-carrier protein] + D-alanine + ATP = D-alanyl-[D-alanyl-carrier protein] + AMP + diphosphate. It participates in cell wall biogenesis; lipoteichoic acid biosynthesis. Functionally, catalyzes the first step in the D-alanylation of lipoteichoic acid (LTA), the activation of D-alanine and its transfer onto the D-alanyl carrier protein (Dcp) DltC. In an ATP-dependent two-step reaction, forms a high energy D-alanyl-AMP intermediate, followed by transfer of the D-alanyl residue as a thiol ester to the phosphopantheinyl prosthetic group of the Dcp. D-alanylation of LTA plays an important role in modulating the properties of the cell wall in Gram-positive bacteria, influencing the net charge of the cell wall. This is D-alanine--D-alanyl carrier protein ligase from Streptococcus pyogenes serotype M28 (strain MGAS6180).